The primary structure comprises 55 residues: A-type ATP synthase subunit G (55 aa).

In terms of assembly, has multiple subunits, A(3), B(3), C, D, E, F, G, I and K(x); there may be a few other subunits as well.

The protein resides in the cell membrane. Its function is as follows. Component of the A-type ATP synthase that produces ATP from ADP in the presence of a proton gradient across the membrane. This is A-type ATP synthase subunit G (atpG) from Methanosarcina mazei (strain ATCC BAA-159 / DSM 3647 / Goe1 / Go1 / JCM 11833 / OCM 88) (Methanosarcina frisia).